We begin with the raw amino-acid sequence, 556 residues long: Adenine deaminase (556 aa).

Belongs to the metallo-dependent hydrolases superfamily. Adenine deaminase family. Mn(2+) serves as cofactor.

It catalyses the reaction adenine + H2O + H(+) = hypoxanthine + NH4(+). This Archaeoglobus fulgidus (strain ATCC 49558 / DSM 4304 / JCM 9628 / NBRC 100126 / VC-16) protein is Adenine deaminase.